The sequence spans 439 residues: Mitochondrial distribution and morphology protein 12 (439 aa).

The region spanning 1–439 is the SMP-LTD domain; the sequence is MSIDVNWRSA…VYPSFWTFLI (439 aa). Over residues 70 to 85 the composition is skewed to acidic residues; sequence YEEDDDDHTSDASEEL. Disordered stretches follow at residues 70 to 102, 184 to 274, and 353 to 386; these read YEEDDDDHTSDASEELGSEHSSQWNRTHPELNE, SGWS…PPRM, and GSEQQQQQESAGDDHRPQSRPDSSASASQKRHGG. Residues 197 to 212 are compositionally biased toward basic and acidic residues; the sequence is GRSERHAGMKHQRAEP. Polar residues predominate over residues 215–230; sequence DTSNSTSRPSTANTLP. Low complexity predominate over residues 231–240; that stretch reads SHPSSSSKNS. Basic and acidic residues predominate over residues 247–261; that stretch reads RNDHPSLHAGEHIED.

This sequence belongs to the MDM12 family. As to quaternary structure, component of the ER-mitochondria encounter structure (ERMES) or MDM complex, composed of mmm1, mdm10, mdm12 and mdm34. A mmm1 homodimer associates with one molecule of mdm12 on each side in a pairwise head-to-tail manner, and the SMP-LTD domains of mmm1 and mdm12 generate a continuous hydrophobic tunnel for phospholipid trafficking.

It localises to the mitochondrion outer membrane. The protein localises to the endoplasmic reticulum membrane. In terms of biological role, component of the ERMES/MDM complex, which serves as a molecular tether to connect the endoplasmic reticulum (ER) and mitochondria. Components of this complex are involved in the control of mitochondrial shape and protein biogenesis, and function in nonvesicular lipid trafficking between the ER and mitochondria. Mdm12 is required for the interaction of the ER-resident membrane protein mmm1 and the outer mitochondrial membrane-resident beta-barrel protein mdm10. The mdm12-mmm1 subcomplex functions in the major beta-barrel assembly pathway that is responsible for biogenesis of all mitochondrial outer membrane beta-barrel proteins, and acts in a late step after the SAM complex. The mdm10-mdm12-mmm1 subcomplex further acts in the TOM40-specific pathway after the action of the mdm12-mmm1 complex. Essential for establishing and maintaining the structure of mitochondria and maintenance of mtDNA nucleoids. In Neosartorya fischeri (strain ATCC 1020 / DSM 3700 / CBS 544.65 / FGSC A1164 / JCM 1740 / NRRL 181 / WB 181) (Aspergillus fischerianus), this protein is Mitochondrial distribution and morphology protein 12.